The chain runs to 738 residues: DNA repair and recombination protein RAD54-like (738 aa).

Positions 1–31 (MRRSLAPSQVAKRKQGPDSDDEEDWEPDMEP) are disordered. Residues 18–29 (DSDDEEDWEPDM) are compositionally biased toward acidic residues. The region spanning 164-339 (GRRIENSYGC…FSLVHFVNSG (176 aa)) is the Helicase ATP-binding domain. Residue 177–184 (DEMGLGKT) participates in ATP binding. The DEAH box motif lies at 290–293 (DEGH). One can recognise a Helicase C-terminal domain in the interval 493–647 (LVLDYILAMT…CVVDEEQDVE (155 aa)). Phosphoserine occurs at positions 566 and 567.

As to quaternary structure, homohexamer. Interacts with RAD51. Phosphorylated. Phosphorylations at Ser-566 and Ser-567 allow efficient removal of RAD51 filaments from DNA.

The enzyme catalyses ATP + H2O = ADP + phosphate + H(+). Its function is as follows. Plays an essential role in homologous recombination (HR) which is a major pathway for repairing DNA double-strand breaks (DSBs), single-stranded DNA (ssDNA) gaps, and stalled or collapsed replication forks. Acts as a molecular motor during the homology search and guides RAD51 ssDNA along a donor dsDNA thereby changing the homology search from the diffusion-based mechanism to a motor-guided mechanism. Also plays an essential role in RAD51-mediated synaptic complex formation which consists of three strands encased in a protein filament formed once homology is recognized. Once DNA strand exchange occured, dissociates RAD51 from nucleoprotein filaments formed on dsDNA. The chain is DNA repair and recombination protein RAD54-like (rad54l) from Danio rerio (Zebrafish).